The chain runs to 844 residues: Translation initiation factor IF-2 (844 aa).

Residues 120 to 132 (RNSVNLVQPQQEK) are compositionally biased toward polar residues. The tract at residues 120–220 (RNSVNLVQPQ…SGKGFKKANP (101 aa)) is disordered. Residues 161 to 175 (DEEKSSEDKSTESKN) show a composition bias toward basic and acidic residues. Positions 205–219 (SKAKKASGKGFKKAN) are enriched in basic residues. Residues 343 to 510 (SRAPVVTIMG…AVLLQSEVLE (168 aa)) enclose the tr-type G domain. Residues 352–359 (GHVDHGKT) form a G1 region. Position 352–359 (352–359 (GHVDHGKT)) interacts with GTP. Residues 377–381 (GITQH) form a G2 region. The interval 398–401 (DTPG) is G3. GTP is bound by residues 398-402 (DTPGH) and 452-455 (NKID). A G4 region spans residues 452 to 455 (NKID). The interval 488-490 (SAK) is G5.

It belongs to the TRAFAC class translation factor GTPase superfamily. Classic translation factor GTPase family. IF-2 subfamily.

The protein resides in the cytoplasm. Its function is as follows. One of the essential components for the initiation of protein synthesis. Protects formylmethionyl-tRNA from spontaneous hydrolysis and promotes its binding to the 30S ribosomal subunits. Also involved in the hydrolysis of GTP during the formation of the 70S ribosomal complex. The chain is Translation initiation factor IF-2 from Francisella philomiragia subsp. philomiragia (strain ATCC 25017 / CCUG 19701 / FSC 153 / O#319-036).